We begin with the raw amino-acid sequence, 104 residues long: Phosphoribosyl-ATP pyrophosphatase (104 aa).

Belongs to the PRA-PH family.

It localises to the cytoplasm. The enzyme catalyses 1-(5-phospho-beta-D-ribosyl)-ATP + H2O = 1-(5-phospho-beta-D-ribosyl)-5'-AMP + diphosphate + H(+). It participates in amino-acid biosynthesis; L-histidine biosynthesis; L-histidine from 5-phospho-alpha-D-ribose 1-diphosphate: step 2/9. This Streptococcus thermophilus (strain ATCC BAA-491 / LMD-9) protein is Phosphoribosyl-ATP pyrophosphatase.